The following is a 102-amino-acid chain: Urease subunit beta (102 aa).

It belongs to the urease beta subunit family. In terms of assembly, heterotrimer of UreA (gamma), UreB (beta) and UreC (alpha) subunits. Three heterotrimers associate to form the active enzyme.

Its subcellular location is the cytoplasm. It catalyses the reaction urea + 2 H2O + H(+) = hydrogencarbonate + 2 NH4(+). The protein operates within nitrogen metabolism; urea degradation; CO(2) and NH(3) from urea (urease route): step 1/1. The chain is Urease subunit beta from Clostridium perfringens.